The following is a 48-amino-acid chain: Phospholipase A2 TI-Nh (48 aa).

The active site involves His25. A Ca(2+)-binding site is contributed by Asp26.

The protein belongs to the phospholipase A2 family. Group I subfamily. D49 sub-subfamily. Monomer. Ca(2+) serves as cofactor. Expressed by the venom gland.

The protein localises to the secreted. It catalyses the reaction a 1,2-diacyl-sn-glycero-3-phosphocholine + H2O = a 1-acyl-sn-glycero-3-phosphocholine + a fatty acid + H(+). Functionally, phospholipase A2 with weak enzymatic activity, which partially inhibits thrombin enzymatic activity (Ki=73 nM), completely inhibits thrombin-induced platelet aggregation and retards fibrin clot formation (IC(50)=0.2 nM). May exert this anticoagulant effect through a non-enzymatic mechanism. The sequence is that of Phospholipase A2 TI-Nh from Naja haje haje (Egyptian cobra).